Here is a 149-residue protein sequence, read N- to C-terminus: Transcriptional repressor NrdR (149 aa).

Residues 3–34 (CPFCSATDTKVIDSRLVADGHQVRRRRECAEC) fold into a zinc finger. The ATP-cone domain occupies 49-139 (PRVVKQDGSR…VYRAFEDVSE (91 aa)).

This sequence belongs to the NrdR family. It depends on Zn(2+) as a cofactor.

In terms of biological role, negatively regulates transcription of bacterial ribonucleotide reductase nrd genes and operons by binding to NrdR-boxes. The protein is Transcriptional repressor NrdR of Shewanella woodyi (strain ATCC 51908 / MS32).